The following is a 347-amino-acid chain: GMP reductase (347 aa).

NADP(+) is bound at residue 108–131; it reads DDFTKTRQILAMSTALRFICVDVA. Residues glycine 181 and glycine 183 each coordinate K(+). The Thioimidate intermediate role is filled by cysteine 186. 216 to 239 provides a ligand contact to NADP(+); that stretch reads IVGDGGCTCPGDVAKAFGGGADFV.

It belongs to the IMPDH/GMPR family. GuaC type 1 subfamily. In terms of assembly, homotetramer.

It catalyses the reaction IMP + NH4(+) + NADP(+) = GMP + NADPH + 2 H(+). Functionally, catalyzes the irreversible NADPH-dependent deamination of GMP to IMP. It functions in the conversion of nucleobase, nucleoside and nucleotide derivatives of G to A nucleotides, and in maintaining the intracellular balance of A and G nucleotides. This is GMP reductase from Aeromonas salmonicida (strain A449).